Here is a 534-residue protein sequence, read N- to C-terminus: CTP synthase (534 aa).

The tract at residues 1 to 267 is amidoligase domain; sequence MSKYIVVTGG…GSYILNRLNI (267 aa). S13 contributes to the CTP binding site. UTP is bound at residue S13. Residue 14 to 19 participates in ATP binding; the sequence is SIGKGI. Position 54 (Y54) interacts with L-glutamine. D71 provides a ligand contact to ATP. The Mg(2+) site is built by D71 and E141. CTP contacts are provided by residues 148–150, 188–193, and K224; these read DIE and KTKPTQ. Residues 188–193 and K224 each bind UTP; that span reads KTKPTQ. Positions 294–532 constitute a Glutamine amidotransferase type-1 domain; that stretch reads KIAVVGKYIE…IKAAKNKKQN (239 aa). G353 is a binding site for L-glutamine. C380 functions as the Nucleophile; for glutamine hydrolysis in the catalytic mechanism. Residues 381–384, E403, and R460 contribute to the L-glutamine site; that span reads LGLH. Active-site residues include H505 and E507.

It belongs to the CTP synthase family. As to quaternary structure, homotetramer.

It carries out the reaction UTP + L-glutamine + ATP + H2O = CTP + L-glutamate + ADP + phosphate + 2 H(+). It catalyses the reaction L-glutamine + H2O = L-glutamate + NH4(+). The enzyme catalyses UTP + NH4(+) + ATP = CTP + ADP + phosphate + 2 H(+). It participates in pyrimidine metabolism; CTP biosynthesis via de novo pathway; CTP from UDP: step 2/2. With respect to regulation, allosterically activated by GTP, when glutamine is the substrate; GTP has no effect on the reaction when ammonia is the substrate. The allosteric effector GTP functions by stabilizing the protein conformation that binds the tetrahedral intermediate(s) formed during glutamine hydrolysis. Inhibited by the product CTP, via allosteric rather than competitive inhibition. Its function is as follows. Catalyzes the ATP-dependent amination of UTP to CTP with either L-glutamine or ammonia as the source of nitrogen. Regulates intracellular CTP levels through interactions with the four ribonucleotide triphosphates. This is CTP synthase from Methanosphaera stadtmanae (strain ATCC 43021 / DSM 3091 / JCM 11832 / MCB-3).